A 349-amino-acid chain; its full sequence is Glycerol-3-phosphate dehydrogenase [NAD(+)], cytoplasmic (349 aa).

10 to 15 (GSGNWG) contributes to the NAD(+) binding site. K120 is a substrate binding site. NAD(+) is bound at residue A153. S154 is modified (phosphoserine). K204 serves as the catalytic Proton acceptor. R269 is a binding site for NAD(+). Residue 269–270 (RN) coordinates substrate. K289 carries the post-translational modification N6-succinyllysine. NAD(+) is bound by residues K296 and Q298. Y326 is subject to Phosphotyrosine.

This sequence belongs to the NAD-dependent glycerol-3-phosphate dehydrogenase family. In terms of assembly, homodimer.

The protein localises to the cytoplasm. The enzyme catalyses sn-glycerol 3-phosphate + NAD(+) = dihydroxyacetone phosphate + NADH + H(+). In terms of biological role, has glycerol-3-phosphate dehydrogenase activity. The sequence is that of Glycerol-3-phosphate dehydrogenase [NAD(+)], cytoplasmic from Rattus norvegicus (Rat).